Consider the following 212-residue polypeptide: Ribonuclease HII (212 aa).

An RNase H type-2 domain is found at 17–211; it reads RVLAGIDEAG…VLELLDLTDS (195 aa). D23, E24, and D120 together coordinate a divalent metal cation.

It belongs to the RNase HII family. The cofactor is Mn(2+). Mg(2+) serves as cofactor.

It is found in the cytoplasm. The enzyme catalyses Endonucleolytic cleavage to 5'-phosphomonoester.. Its function is as follows. Endonuclease that specifically degrades the RNA of RNA-DNA hybrids. The sequence is that of Ribonuclease HII from Chloroflexus aggregans (strain MD-66 / DSM 9485).